The chain runs to 305 residues: UDP-3-O-acyl-N-acetylglucosamine deacetylase (305 aa).

H79, H238, and D242 together coordinate Zn(2+). The Proton donor role is filled by H265.

This sequence belongs to the LpxC family. The cofactor is Zn(2+).

It carries out the reaction a UDP-3-O-[(3R)-3-hydroxyacyl]-N-acetyl-alpha-D-glucosamine + H2O = a UDP-3-O-[(3R)-3-hydroxyacyl]-alpha-D-glucosamine + acetate. It functions in the pathway glycolipid biosynthesis; lipid IV(A) biosynthesis; lipid IV(A) from (3R)-3-hydroxytetradecanoyl-[acyl-carrier-protein] and UDP-N-acetyl-alpha-D-glucosamine: step 2/6. In terms of biological role, catalyzes the hydrolysis of UDP-3-O-myristoyl-N-acetylglucosamine to form UDP-3-O-myristoylglucosamine and acetate, the committed step in lipid A biosynthesis. This chain is UDP-3-O-acyl-N-acetylglucosamine deacetylase, found in Colwellia psychrerythraea (strain 34H / ATCC BAA-681) (Vibrio psychroerythus).